Here is a 212-residue protein sequence, read N- to C-terminus: Putative 3-methyladenine DNA glycosylase (212 aa).

The protein belongs to the DNA glycosylase MPG family.

The chain is Putative 3-methyladenine DNA glycosylase from Nocardia farcinica (strain IFM 10152).